Here is a 284-residue protein sequence, read N- to C-terminus: Polyamine aminopropyltransferase (284 aa).

One can recognise a PABS domain in the interval 2–237; sequence ELWYTEEQTQ…GYWLFGFASK (236 aa). Gln-31 provides a ligand contact to S-methyl-5'-thioadenosine. Spermidine is bound by residues His-62 and Asp-86. S-methyl-5'-thioadenosine contacts are provided by residues Glu-106 and 137-138; that span reads DG. The active-site Proton acceptor is the Asp-155. Residue 155–158 coordinates spermidine; sequence DSTD. Residue Pro-162 participates in S-methyl-5'-thioadenosine binding.

This sequence belongs to the spermidine/spermine synthase family. In terms of assembly, homodimer or homotetramer.

The protein resides in the cytoplasm. The catalysed reaction is S-adenosyl 3-(methylsulfanyl)propylamine + putrescine = S-methyl-5'-thioadenosine + spermidine + H(+). It participates in amine and polyamine biosynthesis; spermidine biosynthesis; spermidine from putrescine: step 1/1. In terms of biological role, catalyzes the irreversible transfer of a propylamine group from the amino donor S-adenosylmethioninamine (decarboxy-AdoMet) to putrescine (1,4-diaminobutane) to yield spermidine. In Alkaliphilus metalliredigens (strain QYMF), this protein is Polyamine aminopropyltransferase.